Here is a 281-residue protein sequence, read N- to C-terminus: NAD-dependent protein deacetylase 3 (281 aa).

The 281-residue stretch at 1–281 (MLDSPTLDLL…PWLAEQLITR (281 aa)) folds into the Deacetylase sirtuin-type domain. NAD(+) is bound by residues 27–47 (GAGI…GVRR) and 105–108 (QNVD). Residue His123 is the Proton acceptor of the active site. Residues Cys131, Cys134, Cys182, and Cys185 each coordinate Zn(2+). NAD(+) is bound by residues 223–225 (GTS), 249–251 (NHG), and Cys267.

Belongs to the sirtuin family. Class II subfamily. The cofactor is Zn(2+).

The protein resides in the cytoplasm. It carries out the reaction N(6)-acetyl-L-lysyl-[protein] + NAD(+) + H2O = 2''-O-acetyl-ADP-D-ribose + nicotinamide + L-lysyl-[protein]. NAD-dependent protein deacetylase which modulates the activities of several enzymes which are inactive in their acetylated form. This is NAD-dependent protein deacetylase 3 from Pseudomonas syringae pv. tomato (strain ATCC BAA-871 / DC3000).